The following is a 397-amino-acid chain: LIM/homeobox protein Lhx9 (397 aa).

2 consecutive LIM zinc-binding domains span residues 69-130 (ALCA…RFSV) and 131-193 (QRCA…LLQG). 2 disordered regions span residues 248–272 (ENEA…RMRT) and 330–364 (ENGG…TLTD). Positions 267-326 (TKRMRTSFKHHQLRTMKSYFAINHNPDAKDLKQLAQKTGLTKRVLQVWFQNARAKFRRNL) form a DNA-binding region, homeobox.

Interacts with LDB1 and LDB2.

It localises to the nucleus. Functionally, involved in gonadal development. The protein is LIM/homeobox protein Lhx9 (LHX9) of Bos taurus (Bovine).